Here is a 57-residue protein sequence, read N- to C-terminus: Phosphatase RapH inhibitor (57 aa).

2 propeptides span residues 1–34 and 41–57; these read MPIKKKVMMCLAVTLVFGSMSFPTLTNSGGFKES and YIDHSPYKLSDQKKALS. Positions 26–57 are disordered; it reads TNSGGFKESTDRNTTYIDHSPYKLSDQKKALS.

This sequence belongs to the Phr family. Post-translationally, contains a predicted signal peptide cleavage site in the N-terminal region, however the propeptide is probably only subject to processing events at the ends of the mature peptide.

Its subcellular location is the secreted. The protein localises to the cytoplasm. Functionally, signaling molecule involved the regulation of both sporulation and competence. Secreted during production, but the mature peptide acts intracellularly, indicating that it needs to be imported into the cell to function. Acts by inhibiting RapH activity. Can inhibit both RapH activities, the dephosphorylation of Spo0F and the sequestration of ComA. The chain is Phosphatase RapH inhibitor (phrH) from Bacillus subtilis (strain 168).